The sequence spans 432 residues: Adenylosuccinate synthetase (432 aa).

GTP is bound by residues 13–19 (GDEGKGK) and 41–43 (GHT). The active-site Proton acceptor is the Asp14. Positions 14 and 41 each coordinate Mg(2+). IMP-binding positions include 14–17 (DEGK), 39–42 (NAGH), Thr130, Arg144, Gln225, Thr240, and Arg304. His42 serves as the catalytic Proton donor. A substrate-binding site is contributed by 300–306 (ATTGRKR). Residues Arg306, 332 to 334 (KLD), and 415 to 417 (STG) contribute to the GTP site.

The protein belongs to the adenylosuccinate synthetase family. As to quaternary structure, homodimer. The cofactor is Mg(2+).

The protein localises to the cytoplasm. The catalysed reaction is IMP + L-aspartate + GTP = N(6)-(1,2-dicarboxyethyl)-AMP + GDP + phosphate + 2 H(+). It functions in the pathway purine metabolism; AMP biosynthesis via de novo pathway; AMP from IMP: step 1/2. Functionally, plays an important role in the de novo pathway of purine nucleotide biosynthesis. Catalyzes the first committed step in the biosynthesis of AMP from IMP. The chain is Adenylosuccinate synthetase from Pseudoalteromonas atlantica (strain T6c / ATCC BAA-1087).